A 525-amino-acid polypeptide reads, in one-letter code: Ribosomal protein uS12 methylthiotransferase RimO (525 aa).

Positions 1 to 20 (MPKISTESVNTTIAPSQPAS) are enriched in polar residues. Residues 1 to 44 (MPKISTESVNTTIAPSQPASTAPKDTATLFNPAKPTATPAQSSI) are disordered. The MTTase N-terminal domain maps to 82-192 (PKIGFVSLGC…VIRAVALHVP (111 aa)). Positions 91, 127, 156, 230, 234, and 237 each coordinate [4Fe-4S] cluster. Residues 216–453 (LTPSHYAYLK…MTLQQDISAQ (238 aa)) enclose the Radical SAM core domain. Residues 456–525 (QEKIGKTLMV…EYDLFASYQA (70 aa)) enclose the TRAM domain.

The protein belongs to the methylthiotransferase family. RimO subfamily. It depends on [4Fe-4S] cluster as a cofactor.

The protein localises to the cytoplasm. It catalyses the reaction L-aspartate(89)-[ribosomal protein uS12]-hydrogen + (sulfur carrier)-SH + AH2 + 2 S-adenosyl-L-methionine = 3-methylsulfanyl-L-aspartate(89)-[ribosomal protein uS12]-hydrogen + (sulfur carrier)-H + 5'-deoxyadenosine + L-methionine + A + S-adenosyl-L-homocysteine + 2 H(+). Catalyzes the methylthiolation of an aspartic acid residue of ribosomal protein uS12. The sequence is that of Ribosomal protein uS12 methylthiotransferase RimO from Psychrobacter arcticus (strain DSM 17307 / VKM B-2377 / 273-4).